The sequence spans 174 residues: NADH-ubiquinone oxidoreductase chain 6 (174 aa).

Transmembrane regions (helical) follow at residues 25–45, 48–68, 82–102, and 143–163; these read SMGLMLLIQTFLTCLITGIYV, FWFSYVLFLIFLGGMLILFIY, FKLTMFSLVLFSLSMVIFFIL, and LITLLLINYLFLTLLVTVKIT.

This sequence belongs to the complex I subunit 6 family.

The protein localises to the mitochondrion membrane. It catalyses the reaction a ubiquinone + NADH + 5 H(+)(in) = a ubiquinol + NAD(+) + 4 H(+)(out). In terms of biological role, core subunit of the mitochondrial membrane respiratory chain NADH dehydrogenase (Complex I) that is believed to belong to the minimal assembly required for catalysis. Complex I functions in the transfer of electrons from NADH to the respiratory chain. The immediate electron acceptor for the enzyme is believed to be ubiquinone. In Anopheles gambiae (African malaria mosquito), this protein is NADH-ubiquinone oxidoreductase chain 6 (mt:ND6).